The chain runs to 378 residues: Homeobox protein Meis3 (378 aa).

The interval 24-57 (FSEAAPSVPRAPGPYTPHRPPQLQAPGLDSDSLK) is disordered. A compositionally biased stretch (pro residues) spans 32 to 43 (PRAPGPYTPHRP). An MEIS N-terminal domain is found at 99–182 (GGDVCSSDSF…PIDLVIEDRD (84 aa)). The segment at 203-265 (NTTWIRDHED…DEDLDLERRR (63 aa)) is disordered. Over residues 230-244 (SQSGDNSSDQGDGLD) the composition is skewed to low complexity. The homeobox; TALE-type DNA-binding region spans 265–327 (RNKKRGIFPK…NARRRIVQPM (63 aa)).

It belongs to the TALE/MEIS homeobox family. As to expression, expressed at high levels in the brain. Significant expression also observed in the heart, spleen and lung. Expressed in pancreatic islets (beta-cells and non-beta-cells).

It localises to the nucleus. Its function is as follows. Transcriptional regulator which directly modulates PDPK1 expression, thus promoting survival of pancreatic beta-cells. Also regulates expression of NDFIP1, BNIP3, and CCNG1. The sequence is that of Homeobox protein Meis3 (Meis3) from Mus musculus (Mouse).